We begin with the raw amino-acid sequence, 104 residues long: uncharacterized protein (104 aa).

Positions methionine 1–alanine 25 are cleaved as a signal peptide. A helical membrane pass occupies residues isoleucine 79–leucine 99.

It is found in the membrane. This is an uncharacterized protein from Saccharomyces cerevisiae (strain ATCC 204508 / S288c) (Baker's yeast).